Consider the following 402-residue polypeptide: Bone morphogenetic protein 8A (402 aa).

A signal peptide spans 1–19 (MAARPGPLWLLGLTLCALG). The propeptide occupies 20 to 263 (GGGPGLRPPP…ASPSPIRTPR (244 aa)). Residues Asn-158 and Asn-343 are each glycosylated (N-linked (GlcNAc...) asparagine). 3 disulfide bridges follow: Cys-301–Cys-367, Cys-330–Cys-399, and Cys-334–Cys-401.

Belongs to the TGF-beta family. Homodimer; disulfide-linked.

The protein localises to the secreted. In terms of biological role, induces cartilage and bone formation. May be the osteoinductive factor responsible for the phenomenon of epithelial osteogenesis. Plays a role in calcium regulation and bone homeostasis. Signaling protein involved in regulation of thermogenesis and energy balance. Proposed to increase the peripheral response of brown adipose tissue (BAT) to adrenergic stimulation while acting centrally in the hypothalamus to increase sympathetic output to BAT. Growth factor of the TGF-beta superfamily that plays important role in various biological processes, including spermatogenesis, osteogenesis, steroidogenesis as well as regulation of energy balance. Initiates the canonical BMP signaling cascade by associating with type I receptor BMPR1A and type II receptor BMPR2. Once all three components are bound together in a complex at the cell surface, BMPR2 phosphorylates and activates BMPR1A. In turn, BMPR1A propagates signal by phosphorylating SMAD1/5/8 that travel to the nucleus and act as activators and repressors of transcription of target genes. In addition, activates the SMAD2/3 pathway. This is Bone morphogenetic protein 8A (BMP8A) from Homo sapiens (Human).